A 556-amino-acid chain; its full sequence is Dihydroxy-acid dehydratase (556 aa).

Cys-47 is a binding site for [2Fe-2S] cluster. Asp-79 lines the Mg(2+) pocket. Cys-120 serves as a coordination point for [2Fe-2S] cluster. Mg(2+) contacts are provided by Asp-121 and Lys-122. The residue at position 122 (Lys-122) is an N6-carboxylysine. A [2Fe-2S] cluster-binding site is contributed by Cys-192. A Mg(2+)-binding site is contributed by Glu-444. Ser-470 (proton acceptor) is an active-site residue.

The protein belongs to the IlvD/Edd family. In terms of assembly, homodimer. [2Fe-2S] cluster is required as a cofactor. Mg(2+) serves as cofactor.

It catalyses the reaction (2R)-2,3-dihydroxy-3-methylbutanoate = 3-methyl-2-oxobutanoate + H2O. The enzyme catalyses (2R,3R)-2,3-dihydroxy-3-methylpentanoate = (S)-3-methyl-2-oxopentanoate + H2O. It participates in amino-acid biosynthesis; L-isoleucine biosynthesis; L-isoleucine from 2-oxobutanoate: step 3/4. Its pathway is amino-acid biosynthesis; L-valine biosynthesis; L-valine from pyruvate: step 3/4. In terms of biological role, functions in the biosynthesis of branched-chain amino acids. Catalyzes the dehydration of (2R,3R)-2,3-dihydroxy-3-methylpentanoate (2,3-dihydroxy-3-methylvalerate) into 2-oxo-3-methylpentanoate (2-oxo-3-methylvalerate) and of (2R)-2,3-dihydroxy-3-methylbutanoate (2,3-dihydroxyisovalerate) into 2-oxo-3-methylbutanoate (2-oxoisovalerate), the penultimate precursor to L-isoleucine and L-valine, respectively. This is Dihydroxy-acid dehydratase from Prochlorococcus marinus (strain MIT 9303).